We begin with the raw amino-acid sequence, 534 residues long: MPMEVFSLTSTAIPSTLTRRDTAADKPSPHLNLSKYSHFMRYPLTTTLTNNRIRSSSSSSSSIRAQASGSTKSSTAEGIPEKTDSKDDNLVFVAGATGKVGSRTVRELIKLGFKVRAGVRNAQKAGALVQSVKQLKLDGASGGGEAVEKLEIVECDLEKADQIGSALGNASTVICAIGASEKEIFDITGPCRIDYRATKNLVDAATVAKVNHFILVTSLGTNKFGLPAAILNLFWGVLIWKRKAEEALLASGIPYTIVRPGGMERPTDAYKETHNVTLSTEDTLFGGQVSNLQVAELMAIMAKNPDLSYCKIVEVIAETTAPLTPAEKLLTRIPSQRPYIPSPKKVQKADTATVSNTGPSANVVAEVPSIAPQKETASKPVAKTEQPLSPYTAYDDLKPPSSPSPTKPSEKKQINISDAVPTPISSDTPSSIQEIDGISQTTSSSKGKESLSPYAAYPDLKPPSSPSPSVPTTSLSKRDTVVVSSNGPAQLSVEDTPKNEEQHLHEPKSRPLSPYAMYEDLKPPASPSPSFRKS.

A chloroplast-targeting transit peptide spans 1–64; sequence MPMEVFSLTS…SSSSSSSSIR (64 aa). The interval 50–83 is disordered; sequence NNRIRSSSSSSSSIRAQASGSTKSSTAEGIPEKT. Over residues 63 to 76 the composition is skewed to polar residues; that stretch reads IRAQASGSTKSSTA. 91 to 120 is a binding site for NADP(+); it reads VFVAGATGKVGSRTVRELIKLGFKVRAGVR. The disordered stretch occupies residues 334–534; that stretch reads PSQRPYIPSP…ASPSPSFRKS (201 aa). Residues 350 to 360 show a composition bias toward polar residues; sequence DTATVSNTGPS. Copy 1 of the repeat occupies 387-408; that stretch reads PLSPYTAYDDLKPPSSPSPTKP. The tract at residues 387–532 is 3 X 22 AA approximate repeats; the sequence is PLSPYTAYDD…PPASPSPSFR (146 aa). Positions 421–432 are enriched in low complexity; that stretch reads PTPISSDTPSSI. Repeat unit 2 spans residues 450-471; it reads SLSPYAAYPDLKPPSSPSPSVP. Residues 460-469 show a composition bias toward pro residues; the sequence is LKPPSSPSPS. The segment covering 495 to 509 has biased composition (basic and acidic residues); the sequence is DTPKNEEQHLHEPKS. Copy 3 of the repeat occupies 511–532; sequence PLSPYAMYEDLKPPASPSPSFR.

As to quaternary structure, part of the Tic complex. Interacts with TIC40, TIC110 and TIC55. Interacts (via C-terminus) with PETH/FNR.

Its subcellular location is the plastid. It is found in the chloroplast inner membrane. The protein localises to the chloroplast stroma. In terms of biological role, involved in protein precursor import into chloroplasts. Part of the redox regulon consisting of TIC32, TIC 55 and TIC62. Has a NADPH-dependent dehydrogenase activity, but only after preincubation with lipids. The polypeptide is Protein TIC 62, chloroplastic (TIC62) (Pisum sativum (Garden pea)).